A 620-amino-acid polypeptide reads, in one-letter code: NADPH-dependent diflavin oxidoreductase 1 (620 aa).

The Flavodoxin-like domain maps to 6 to 168; sequence IAILYGSETG…VYSEFEKRVL (163 aa). Residues 12–17, 59–62, and 106–115 each bind FMN; these read SETGTA, STTG, and LGDSSYSKFN. The FAD-binding FR-type domain occupies 222 to 475; the sequence is SSVKYGTVVT…LLPAGKQDRP (254 aa). FAD-binding positions include R380, 410–413, and 442–445; these read RFFS and GLCT. Residue 535–536 participates in NADP(+) binding; sequence SR. W620 is a binding site for FAD.

Belongs to the NADPH-dependent diflavin oxidoreductase NDOR1 family. The protein in the N-terminal section; belongs to the flavodoxin family. It in the C-terminal section; belongs to the flavoprotein pyridine nucleotide cytochrome reductase family. As to quaternary structure, interacts with DRE2; as part of the cytosolic iron-sulfur (Fe-S) protein assembly (CIA) machinery. The cofactor is FAD. It depends on FMN as a cofactor.

The protein localises to the cytoplasm. Its subcellular location is the mitochondrion. It carries out the reaction 2 oxidized [2Fe-2S]-[protein] + NADPH = 2 reduced [2Fe-2S]-[protein] + NADP(+) + H(+). Functionally, NADPH-dependent reductase which is a central component of the cytosolic iron-sulfur (Fe-S) protein assembly (CIA) machinery. Transfers electrons from NADPH via its FAD and FMN prosthetic groups to the [2Fe-2S] cluster of DRE2, another key component of the CIA machinery. In turn, this reduced cluster provides electrons for assembly of cytosolic iron-sulfur cluster proteins. Positively controls H(2)O(2)-induced cell death. This Eremothecium gossypii (strain ATCC 10895 / CBS 109.51 / FGSC 9923 / NRRL Y-1056) (Yeast) protein is NADPH-dependent diflavin oxidoreductase 1.